A 292-amino-acid polypeptide reads, in one-letter code: Histamine N-methyltransferase (292 aa).

Glu-28 provides a ligand contact to substrate. Residues Gly-60, Glu-89, Gln-94, Ser-120, and Ile-142 each coordinate S-adenosyl-L-methionine. Residue Asn-283 coordinates substrate.

It belongs to the class I-like SAM-binding methyltransferase superfamily. HNMT family. Monomer. Expressed in jejunum, brain &gt; lung, spleen, stomach &gt; liver, kidney.

Its subcellular location is the cytoplasm. It carries out the reaction histamine + S-adenosyl-L-methionine = N(tau)-methylhistamine + S-adenosyl-L-homocysteine + H(+). Its function is as follows. Inactivates histamine by N-methylation. Plays an important role in degrading histamine and in regulating the airway response to histamine. In Cavia porcellus (Guinea pig), this protein is Histamine N-methyltransferase (HNMT).